The following is a 748-amino-acid chain: Probable transcriptional regulator SLK1 (748 aa).

Disordered regions lie at residues 67–93 (QHLP…RENN) and 138–163 (QQRL…QQQQ). Residues 71–81 (QQQQQQLLQQQ) show a composition bias toward low complexity. Residues 204–451 (PAENCITYWR…EQKIGPIEGL (248 aa)) are dimerization. The short motif at 213-227 (RKFVAEYFSPRAKQR) is the Nuclear localization signal element. Positions 572 to 587 (NAMNNPNSNTGKQEGF) are enriched in polar residues. Disordered regions lie at residues 572-653 (NAMN…GNTP) and 667-712 (ENGG…NNSF). Residues 588–606 (SSQNPTPNSNQSPSSSSQQ) are compositionally biased toward low complexity. Over residues 615–653 (FPNSPQMQQQQRTMNGPTNILPQNHPHQLQSPHSHGNTP) the composition is skewed to polar residues. Positions 667–686 (ENGGSVQQQQAFSGQSGSNS) are enriched in low complexity. Over residues 687-699 (NAERNTTASTSNI) the composition is skewed to polar residues.

Belongs to the adn1/SEU family. As to quaternary structure, forms corepressor complexes with LUH; LUH is the transcription repressor subunit and SLK1 the specific DNA-binding adapters. In terms of tissue distribution, expressed in young flower meristems, ovules and the carpel margin meristem.

Its subcellular location is the nucleus. In terms of biological role, probable transcription regulator that functions in the development of the carpel margin meristem similarly to SEUSS (SEU). In association with SEU, supports organ development from meristematic regions by facilitating auxin response and thus organ initiation, and by sustaining meristematic potential through the maintenance of PHABULOSA expression. DNA-binding adapter subunit of the SEU-SLK1 transcriptional corepressor of abiotic stress (e.g. salt and osmotic stress) response genes. The chain is Probable transcriptional regulator SLK1 (SLK1) from Arabidopsis thaliana (Mouse-ear cress).